A 219-amino-acid chain; its full sequence is MRPSNALITPEGYPFIAYSAGLFLFLAGGAVLLKSVALAVPAAVTLLLVLFVISFFRNPERMPPADTALLVAPADGTVVYVGPATQEHLGACQKISIFMSVFNVHVNRAPISGTVVDRFYKQGKFYDARHADASCENEQCGLVMEQDNGVRVAFVQIAGLIARRILCYAEVGDRLERGQRYGMIRFGSRVDVYLPEGLESLVTVGQTTVAGETALVRLG.

The active-site Schiff-base intermediate with substrate; via pyruvic acid is Ser-188. The residue at position 188 (Ser-188) is a Pyruvic acid (Ser); by autocatalysis.

This sequence belongs to the phosphatidylserine decarboxylase family. PSD-A subfamily. Heterodimer of a large membrane-associated beta subunit and a small pyruvoyl-containing alpha subunit. The cofactor is pyruvate. Post-translationally, is synthesized initially as an inactive proenzyme. Formation of the active enzyme involves a self-maturation process in which the active site pyruvoyl group is generated from an internal serine residue via an autocatalytic post-translational modification. Two non-identical subunits are generated from the proenzyme in this reaction, and the pyruvate is formed at the N-terminus of the alpha chain, which is derived from the carboxyl end of the proenzyme. The post-translation cleavage follows an unusual pathway, termed non-hydrolytic serinolysis, in which the side chain hydroxyl group of the serine supplies its oxygen atom to form the C-terminus of the beta chain, while the remainder of the serine residue undergoes an oxidative deamination to produce ammonia and the pyruvoyl prosthetic group on the alpha chain.

The protein localises to the cell membrane. It catalyses the reaction a 1,2-diacyl-sn-glycero-3-phospho-L-serine + H(+) = a 1,2-diacyl-sn-glycero-3-phosphoethanolamine + CO2. It functions in the pathway phospholipid metabolism; phosphatidylethanolamine biosynthesis; phosphatidylethanolamine from CDP-diacylglycerol: step 2/2. Its function is as follows. Catalyzes the formation of phosphatidylethanolamine (PtdEtn) from phosphatidylserine (PtdSer). The sequence is that of Phosphatidylserine decarboxylase proenzyme from Trichlorobacter lovleyi (strain ATCC BAA-1151 / DSM 17278 / SZ) (Geobacter lovleyi).